Here is a 382-residue protein sequence, read N- to C-terminus: Pyruvate dehydrogenase E1 component subunit beta, mitochondrial (382 aa).

The transit peptide at 1 to 46 directs the protein to the mitochondrion; it reads MSRFLRPAFRLATTATRASTIRPTPSSLITKAAAVPTTRLLQKRSY. Glu-112 provides a ligand contact to thiamine diphosphate. The K(+) site is built by Ile-165, Ala-213, Ile-214, Asp-216, and Asn-218.

As to quaternary structure, eukaryotic pyruvate dehydrogenase (PDH) complexes are organized as a core consisting of the oligomeric dihydrolipoamide acetyl-transferase (E2), around which are arranged multiple copies of pyruvate dehydrogenase (E1), dihydrolipoamide dehydrogenase (E3) and protein X (E3BP) bound by non-covalent bonds. The Chaetomium thermophilum PDH complex contains 60 E2 units, 12 E3BP units, about 20 E1 units, and 12 or more E3 units. The units are organized in 1 E2 60-mer, 4 E3BP trimers, about 20 E1 tetramers, and a maximum of 12 E3 dimers. Pyruvate dehydrogenase (E1) is active as a tetramer of 2 alpha and 2 beta subunits. The E3BP trimers are bound inside the icosahedral core with tetrahedral symmetry. Thiamine diphosphate is required as a cofactor.

The protein resides in the mitochondrion. The enzyme catalyses N(6)-[(R)-lipoyl]-L-lysyl-[protein] + pyruvate + H(+) = N(6)-[(R)-S(8)-acetyldihydrolipoyl]-L-lysyl-[protein] + CO2. Its function is as follows. The 10-megadalton pyruvate dehydrogenase complex contains multiple copies of three enzymatic components: pyruvate dehydrogenase (E1), dihydrolipoamide acetyltransferase (E2) and lipoamide dehydrogenase (E3) and catalyzes the overall oxidative decarboxylation of pyruvate to form acetyl-CoA and CO(2). Within the complex, pyruvate and thiamine pyrophosphate (TPP or vitamin B1) are bound by pyruvate dehydrogenase E1 subunits alpha and beta and pyruvate is decarboxylated leading to the 2-carbon hydrohyethyl bound to TPP. The E2 component contains covalently-bound lipoyl cofactors and transfers the hydroxyethyl group from TPP to an oxidized form of covalently bound lipoamide, and the resulting acetyl group is then transferred to free coenzyme A to form acetyl-CoA and reduced dihydrolipoamide-E2. Finally, the flavoprotein dihydrolipoamide dehydrogenase (E3) re-oxidizes the lipoyl group of dihydrolipoamide-E2 to form lipoamide-E2 and NADH. A fourth subunit, E3BP, is responsible for tethering E3 in proximity to the core, forming the entire metabolon. In Chaetomium thermophilum (strain DSM 1495 / CBS 144.50 / IMI 039719) (Thermochaetoides thermophila), this protein is Pyruvate dehydrogenase E1 component subunit beta, mitochondrial.